The chain runs to 1050 residues: Inositol hexakisphosphate kinase 1 (1050 aa).

Disordered stretches follow at residues 87-117 (KITRSEATPKSVPEGLQVSEKKNNPDTLSSS), 129-177 (PAIK…IQNV), 269-319 (RQEN…DNEH), and 396-423 (SDLDQENNGKNDTSNENKDIEVNHNNND). Serine 150 is subject to Phosphoserine. Residues 156 to 173 (KQQSHQPQVLHHQTSLKP) show a composition bias toward polar residues. Basic and acidic residues predominate over residues 290–306 (ESIKEKPNTFEQDKEGE). Acidic residues predominate over residues 307 to 316 (QADEEEDEGD). Position 396 is a phosphoserine (serine 396). Positions 402–417 (NNGKNDTSNENKDIEV) are enriched in basic and acidic residues. A Phosphoserine modification is found at serine 469. Over residues 508–522 (NDSYFSSSSSHNSCS) the composition is skewed to low complexity. 2 disordered regions span residues 508–539 (NDSYFSSSSSHNSCSFGERGNTNKLKRRDSGS) and 562–625 (RKRN…PNLQ). Residues serine 537, serine 539, serine 566, serine 583, serine 589, serine 646, serine 664, and serine 670 each carry the phosphoserine modification. Positions 566-624 (SNTTTMGNHNARLGSSPSFLTQKSRASSHDASNTSMKTLGDSSSQASLQMDDSKVNPNL) are enriched in polar residues. 772–780 (PCALDLKMG) lines the substrate pocket.

This sequence belongs to the inositol phosphokinase (IPK) family.

It localises to the cytoplasm. The catalysed reaction is 1D-myo-inositol hexakisphosphate + ATP = 5-diphospho-1D-myo-inositol 1,2,3,4,6-pentakisphosphate + ADP. It carries out the reaction 1-diphospho-1D-myo-inositol 2,3,4,5,6-pentakisphosphate + ATP + H(+) = 1,5-bis(diphospho)-1D-myo-inositol 2,3,4,6-tetrakisphosphate + ADP. Its function is as follows. Converts inositol hexakisphosphate (InsP6) to diphosphoinositol pentakisphosphate (InsP7/PP-InsP5). Involved in phosphate regulation and polyphosphate accumulation. Required for resistance to salt stress, cell wall integrity, vacuole morphogenesis, and telomere maintenance. This chain is Inositol hexakisphosphate kinase 1 (KCS1), found in Saccharomyces cerevisiae (strain ATCC 204508 / S288c) (Baker's yeast).